The sequence spans 707 residues: Elongation factor G (707 aa).

The tr-type G domain maps to 8-297 (ERVRNIGIAA…AVLDYLPSPL (290 aa)). GTP contacts are provided by residues 17–24 (AHIDAGKT), 96–100 (DTPGH), and 150–153 (NKMD).

Belongs to the TRAFAC class translation factor GTPase superfamily. Classic translation factor GTPase family. EF-G/EF-2 subfamily.

Its subcellular location is the cytoplasm. Functionally, catalyzes the GTP-dependent ribosomal translocation step during translation elongation. During this step, the ribosome changes from the pre-translocational (PRE) to the post-translocational (POST) state as the newly formed A-site-bound peptidyl-tRNA and P-site-bound deacylated tRNA move to the P and E sites, respectively. Catalyzes the coordinated movement of the two tRNA molecules, the mRNA and conformational changes in the ribosome. The protein is Elongation factor G of Gloeobacter violaceus (strain ATCC 29082 / PCC 7421).